Consider the following 69-residue polypeptide: Large ribosomal subunit protein uL29 (69 aa).

Belongs to the universal ribosomal protein uL29 family.

The polypeptide is Large ribosomal subunit protein uL29 (Parasynechococcus marenigrum (strain WH8102)).